The chain runs to 114 residues: MHELSIAHNIVNIASAAAAEAGTEEISAVYLRIGALAGVVADALRFSFAIAAEGTPLANAELIIEEVPVTVFCPTCNTEVTLPNPRLFRCPHCGRPCGQIIHGRELELVALETP.

Residue His2 participates in Ni(2+) binding. The Zn(2+) site is built by Cys73, Cys76, Cys90, and Cys93.

It belongs to the HypA/HybF family.

Functionally, involved in the maturation of [NiFe] hydrogenases. Required for nickel insertion into the metal center of the hydrogenase. This is Hydrogenase maturation factor HypA from Chloroflexus aggregans (strain MD-66 / DSM 9485).